A 426-amino-acid chain; its full sequence is Glutamate-1-semialdehyde 2,1-aminomutase (426 aa).

Residue K265 is modified to N6-(pyridoxal phosphate)lysine.

It belongs to the class-III pyridoxal-phosphate-dependent aminotransferase family. HemL subfamily. In terms of assembly, homodimer. Pyridoxal 5'-phosphate serves as cofactor.

It localises to the cytoplasm. The enzyme catalyses (S)-4-amino-5-oxopentanoate = 5-aminolevulinate. The protein operates within porphyrin-containing compound metabolism; protoporphyrin-IX biosynthesis; 5-aminolevulinate from L-glutamyl-tRNA(Glu): step 2/2. The polypeptide is Glutamate-1-semialdehyde 2,1-aminomutase (Yersinia pestis bv. Antiqua (strain Antiqua)).